The primary structure comprises 359 residues: Methylthioribose-1-phosphate isomerase (359 aa).

Residues 50–52, Arg93, and Gln200 contribute to the substrate site; that span reads RGA. Residue Asp241 is the Proton donor of the active site. Residue 251–252 participates in substrate binding; that stretch reads NK.

It belongs to the eIF-2B alpha/beta/delta subunits family. MtnA subfamily.

It catalyses the reaction 5-(methylsulfanyl)-alpha-D-ribose 1-phosphate = 5-(methylsulfanyl)-D-ribulose 1-phosphate. It functions in the pathway amino-acid biosynthesis; L-methionine biosynthesis via salvage pathway; L-methionine from S-methyl-5-thio-alpha-D-ribose 1-phosphate: step 1/6. Catalyzes the interconversion of methylthioribose-1-phosphate (MTR-1-P) into methylthioribulose-1-phosphate (MTRu-1-P). The sequence is that of Methylthioribose-1-phosphate isomerase from Symbiobacterium thermophilum (strain DSM 24528 / JCM 14929 / IAM 14863 / T).